A 344-amino-acid polypeptide reads, in one-letter code: Phosphate acyltransferase (344 aa).

Belongs to the PlsX family. As to quaternary structure, homodimer. Probably interacts with PlsY.

It localises to the cytoplasm. It catalyses the reaction a fatty acyl-[ACP] + phosphate = an acyl phosphate + holo-[ACP]. It participates in lipid metabolism; phospholipid metabolism. Its function is as follows. Catalyzes the reversible formation of acyl-phosphate (acyl-PO(4)) from acyl-[acyl-carrier-protein] (acyl-ACP). This enzyme utilizes acyl-ACP as fatty acyl donor, but not acyl-CoA. This is Phosphate acyltransferase from Cronobacter sakazakii (strain ATCC BAA-894) (Enterobacter sakazakii).